The sequence spans 1544 residues: Transcriptional activator GLI3 (1544 aa).

Polar residues-rich tracts occupy residues 1-10 (MEAQSHSSTT) and 402-429 (NPVQVSSGPSESTQHNKPTSESAVSSTG). Disordered stretches follow at residues 1 to 83 (MEAQ…EERA) and 373 to 477 (SAFG…QEPE). Positions 463-476 (VKEEGDKDESKQEP) are enriched in basic and acidic residues. The C2H2-type 1 zinc finger occupies 482-509 (TNCHWEGCSREFDTQEQLVHHINNDHIH). Residues 520–542 (LDCSREQKPFKAQYMLVVHMRRH) form a C2H2-type 2; degenerate zinc finger. 3 consecutive C2H2-type zinc fingers follow at residues 548 to 572 (HKCTFEGCTKAYSRLENLKTHLRSH), 578 to 603 (YVCEHEGCNKAFSNASDRAKHQNRTH), and 609 to 634 (YVCKIPGCTKRYTDPSSLRKHVKTVH). 4 disordered regions span residues 622 to 728 (DPSS…YSNN), 865 to 919 (RSSG…DLPS), 1126 to 1155 (SVVLGNNNPSSFDRAPPASSQPAGSEVSKS), and 1327 to 1368 (HYQG…GNQS). The segment covering 634–650 (HGPEAHVTKKQRGDIHP) has biased composition (basic and acidic residues). Residues 660 to 685 (SHSQTRSPGQQTQGATGEQKDLNSTT) show a composition bias toward polar residues. The segment covering 686-701 (SRREECLQVKAVKSEK) has biased composition (basic and acidic residues). Residues 702-728 (PMTSQPSPGGQSTCSSEQSPISNYSNN) are compositionally biased toward polar residues. The segment covering 865–882 (RSSGISPCFSSRRSSDAS) has biased composition (low complexity). Over residues 1330–1355 (GVNQSSPMTLGQVSPTSQSSLHQGPQ) the composition is skewed to polar residues.

Belongs to the GLI C2H2-type zinc-finger protein family. Phosphorylation is essential for its proteolytic processing. Post-translationally, the repressor form (GLI3R), a C-terminally truncated form is generated from the full-length GLI3 protein (GLI3FL) through proteolytic processing.

The protein localises to the nucleus. It localises to the cytoplasm. Its function is as follows. Has a dual function as a transcriptional activator and a repressor of the sonic hedgehog (Shh) pathway, and plays a role in limb development. The full-length GLI3 form (GLI3FL) acts as an activator (GLI3A) while GLI3R, its C-terminally truncated form, acts as a repressor. The protein is Transcriptional activator GLI3 (GLI3) of Gallus gallus (Chicken).